We begin with the raw amino-acid sequence, 604 residues long: Protein TAX4 (604 aa).

Disordered stretches follow at residues 38-77, 132-249, 267-299, 338-380, and 394-428; these read HPNG…PRSI, SFSN…RQQE, GTLP…QQEN, DETF…KGLK, and PFPH…NEDK. Residues 176-185 are compositionally biased toward polar residues; it reads YDNNVRSRSI. Low complexity-rich tracts occupy residues 186-203 and 224-240; these read SPQV…SISS and SMSS…KASL. Basic residues-rich tracts occupy residues 276-290, 366-379, and 396-421; these read SQRK…HRLL, KKKK…KKGL, and PHHH…HTSS. In terms of domain architecture, EH spans 469–559; that stretch reads ANEDDESHLQ…RVWNSVDGYV (91 aa).

Belongs to the IRS4 family. Interacts with INP51.

Functionally, with IRS4, acts as a positive regulator of INP51 activity and phosphatidylinositol 4,5-bisphosphate turnover. Negatively regulates signaling through the cell integrity pathway, including the MAP kinase SLT2. The protein is Protein TAX4 (TAX4) of Saccharomyces cerevisiae (strain ATCC 204508 / S288c) (Baker's yeast).